The sequence spans 1537 residues: Flocculation protein FLO1 (1537 aa).

Positions 1 to 24 (MTMPHRYMFLAVFTLLALTSVASG) are cleaved as a signal peptide. A PA14 domain is found at 74–249 (GGQTDISIDY…GTTVSDDFEG (176 aa)). 2 N-linked (GlcNAc...) asparagine glycosylation sites follow: Asn135 and Asn187. The segment at 197–240 (GGSLPPNIEGTVYMYAGYYYPMKVVYSNAVSWGTLPISVTLPDG) is sugar recognition. Asn262 carries an N-linked (GlcNAc...) asparagine glycan. Tandem repeats lie at residues 278 to 322 (TTTE…STII), 323 to 367 (TTTE…TTAI), 368 to 412 (TTTE…TTAM), 413 to 457 (TTTQ…TTAM), 458 to 502 (TTTQ…TTAM), 503 to 547 (TTTQ…TTAM), 548 to 592 (TTPQ…TTAI), 593 to 637 (TTTE…TTAI), 638 to 682 (TTTQ…TTAM), 683 to 727 (TTTQ…TTAM), 728 to 772 (TTTQ…GLIS), 773 to 817 (TTTE…GLVT), 818 to 862 (TTTE…GLIS), 863 to 907 (TTTE…GLIS), 908 to 952 (TTTE…GLIS), 953 to 997 (TTTE…GLIS), 998 to 1042 (TTTE…GLVT), and 1043 to 1087 (TTTE…ISSS). Residues 278-1087 (TTTEPWTGTF…KTPTTAISSS (810 aa)) are 18 X 45 AA approximate tandem repeats, Thr-rich. Asn329, Asn374, Asn419, Asn464, Asn509, Asn554, Asn599, Asn644, Asn689, and Asn734 each carry an N-linked (GlcNAc...) asparagine glycan. 2 disordered regions span residues 770-799 (LIST…NGQP) and 860-889 (LIST…NGQP). Over residues 773-795 (TTTEPWTGTFTSTSTEMTTVTGT) the composition is skewed to low complexity. Positions 863-885 (TTTEPWTGTFTSTSTEMTTITGT) are enriched in low complexity. The tract at residues 995–1024 (LISTTTEPWTGTFTSTSTEMTTVTGTNGQP) is disordered. Positions 998–1020 (TTTEPWTGTFTSTSTEMTTVTGT) are enriched in low complexity. Residue Asn1114 is glycosylated (N-linked (GlcNAc...) asparagine). 2 tandem repeats follow at residues 1118–1137 (VISS…TSSP) and 1138–1157 (VISS…IFSE). The interval 1118-1157 (VISSSVISSSVTSSLFTSSPVISSSVISSSTTTSTSIFSE) is 2 X 20 AA approximate tandem repeats, Ser/Thr-rich. Over residues 1161 to 1220 (SSVIPTSSSTSGSSESETSSAGSVSSSSFISSESSKSPTYSSSSLPLVTSATTSQETASS) the composition is skewed to low complexity. Positions 1161 to 1232 (SSVIPTSSST…PATTTKTSEQ (72 aa)) are disordered. The span at 1222–1232 (PPATTTKTSEQ) shows a compositional bias: polar residues. 6 repeat units span residues 1226 to 1276 (TTKT…CPIS), 1291 to 1341 (TTET…CPIS), 1342 to 1392 (TTES…RPQT), 1408 to 1416 (ETTTNTLAA), 1417 to 1425 (ETTTNTVAA), and 1426 to 1434 (ETITNTGAA). The 3 X 51 AA approximate repeats, Ser/Thr-rich stretch occupies residues 1226–1392 (TTKTSEQTTL…TVYPTWRPQT (167 aa)). Residues 1392-1404 (TANEESVSSKMNS) show a composition bias toward polar residues. The tract at residues 1392-1414 (TANEESVSSKMNSATGETTTNTL) is disordered. Over residues 1405 to 1414 (ATGETTTNTL) the composition is skewed to low complexity. The interval 1408–1434 (ETTTNTLAAETTTNTVAAETITNTGAA) is 3 X 9 AA approximate tandem repeats, Thr-rich. Residues 1468–1497 (VSVSETGNTKSLTSSGLSTMSQQPRSTPAS) are disordered. The segment covering 1472–1497 (ETGNTKSLTSSGLSTMSQQPRSTPAS) has biased composition (polar residues). Gly1514 carries the GPI-anchor amidated glycine lipid modification. A propeptide spans 1515-1537 (SANSLLAGSGLSVFIASLLLAII) (removed in mature form).

It belongs to the flocculin family. Post-translationally, extensively N- and O-glycosylated. In terms of processing, the GPI-anchor is attached to the protein in the endoplasmic reticulum and serves to target the protein to the cell surface. There, the glucosamine-inositol phospholipid moiety is cleaved off and the GPI-modified mannoprotein is covalently attached via its lipidless GPI glycan remnant to the 1,6-beta-glucan of the outer cell wall layer.

Its subcellular location is the cell membrane. The protein resides in the secreted. The protein localises to the cell wall. In terms of biological role, cell wall protein that participates directly in adhesive cell-cell interactions during yeast flocculation, a reversible, asexual and Ca(2+)-dependent process in which cells adhere to form aggregates (flocs) consisting of thousands of cells. The lectin-like protein sticks out of the cell wall of flocculent cells and selectively binds mannose residues in the cell walls of adjacent cells. Activity is inhibited by mannose, but not by glucose, maltose, sucrose or galactose. Also involved in cell-substrate adhesion. The polypeptide is Flocculation protein FLO1 (FLO1) (Saccharomyces cerevisiae (strain ATCC 204508 / S288c) (Baker's yeast)).